We begin with the raw amino-acid sequence, 94 residues long: Protein EGG APPARATUS-1 (94 aa).

The Cytoplasmic segment spans residues 1-15 (MSSCPAIVNMKDDDG). Residues 16–36 (IGAMGAAVAFAAMGVFGIYFL) form a helical; Signal-anchor for type II membrane protein membrane-spanning segment. At 37–94 (WPVVGPTSAGMMMKAPGAAGWVICRAVFEANPQLYFTILRTAGAAAAAATFAACSIAS) the chain is on the extracellular side.

In terms of processing, possible proteolysis of the C-terminal region from the predicted transmembrane domain to permit secretion and transport of the mature protein to the cell walls of the nucellus, allowing the spreading from the egg cell apparatus to the micropylar opening of the ovule. As to expression, expressed only in the egg apparatus, consisting of the egg cell and two synergids. Not detected in the central cell, antipodals, and nucellar and integumental cells.

It localises to the membrane. Involved in short-range signaling required for pollen tube attraction by the female gametophyte. Required for female fertility. The sequence is that of Protein EGG APPARATUS-1 (Ea1) from Zea mays (Maize).